The chain runs to 563 residues: Eukaryotic translation initiation factor 3 subunit D (563 aa).

The interval 95–136 is disordered; sequence PGYMRNRNRFNQRGGYRRDNRGGRFQGQGGNMGMQNLSRGRD. The tract at residues 294–308 is RNA gate; it reads EFDLLTVGETANDLN. Residues 528 to 563 are disordered; sequence IPNSTFETDEEDDDDDEDDVENDDGDDEKDEGDGED. Residues 534–563 are compositionally biased toward acidic residues; it reads ETDEEDDDDDEDDVENDDGDDEKDEGDGED.

It belongs to the eIF-3 subunit D family. As to quaternary structure, component of the eukaryotic translation initiation factor 3 (eIF-3) complex.

It localises to the cytoplasm. MRNA cap-binding component of the eukaryotic translation initiation factor 3 (eIF-3) complex, which is involved in protein synthesis of a specialized repertoire of mRNAs and, together with other initiation factors, stimulates binding of mRNA and methionyl-tRNAi to the 40S ribosome. The eIF-3 complex specifically targets and initiates translation of a subset of mRNAs involved in cell proliferation. In the eIF-3 complex, eif3d specifically recognizes and binds the 7-methylguanosine cap of a subset of mRNAs. This Nematostella vectensis (Starlet sea anemone) protein is Eukaryotic translation initiation factor 3 subunit D.